Reading from the N-terminus, the 119-residue chain is Holo-[acyl-carrier-protein] synthase (119 aa).

2 residues coordinate Mg(2+): Asp-8 and Glu-58.

Belongs to the P-Pant transferase superfamily. AcpS family. The cofactor is Mg(2+).

Its subcellular location is the cytoplasm. It catalyses the reaction apo-[ACP] + CoA = holo-[ACP] + adenosine 3',5'-bisphosphate + H(+). Functionally, transfers the 4'-phosphopantetheine moiety from coenzyme A to a Ser of acyl-carrier-protein. The protein is Holo-[acyl-carrier-protein] synthase of Bacillus cereus (strain ZK / E33L).